The following is a 690-amino-acid chain: Glycine--tRNA ligase beta subunit (690 aa).

The protein belongs to the class-II aminoacyl-tRNA synthetase family. In terms of assembly, tetramer of two alpha and two beta subunits.

Its subcellular location is the cytoplasm. The enzyme catalyses tRNA(Gly) + glycine + ATP = glycyl-tRNA(Gly) + AMP + diphosphate. The polypeptide is Glycine--tRNA ligase beta subunit (Proteus mirabilis (strain HI4320)).